A 155-amino-acid chain; its full sequence is Protein SprT-like (155 aa).

The SprT-like domain occupies 7-145 (QQHMEEVSLQ…GSCGGRLKQT (139 aa)). Histidine 67 is a Zn(2+) binding site. The active site involves glutamate 68. Histidine 71 contributes to the Zn(2+) binding site.

It belongs to the SprT family. Zn(2+) serves as cofactor.

It is found in the cytoplasm. The chain is Protein SprT-like from Listeria innocua serovar 6a (strain ATCC BAA-680 / CLIP 11262).